A 103-amino-acid chain; its full sequence is MEYTSNWIFSNGLCLGIRGRKSLKPQHIYRSIFYSNFILLSSLLIGGLLITIACYHICQCLFNNSMIYYYLYHRAPPYIYHCKRRAKFFTFFFFATQRDLKRT.

A helical membrane pass occupies residues 37 to 57 (FILLSSLLIGGLLITIACYHI).

It localises to the membrane. This is an uncharacterized protein from Saccharomyces cerevisiae (strain ATCC 204508 / S288c) (Baker's yeast).